The following is a 272-amino-acid chain: Outer surface protein A (272 aa).

The N-terminal stretch at 1–16 is a signal peptide; the sequence is MKKYLLGIGLILALIA. Cys-17 carries N-palmitoyl cysteine lipidation. A lipid anchor (S-diacylglycerol cysteine) is attached at Cys-17.

The protein belongs to the OspA lipoprotein family.

Its subcellular location is the cell outer membrane. It is found in the cell surface. In Borreliella burgdorferi (Lyme disease spirochete), this protein is Outer surface protein A.